Consider the following 278-residue polypeptide: HTH-type transcriptional activator RhaS (278 aa).

The region spanning 174 to 272 is the HTH araC/xylS-type domain; it reads NLLLAWLEDH…NWSPRDIRQG (99 aa). 2 consecutive DNA-binding regions (H-T-H motif) follow at residues 191-212 and 239-262; these read DAVA…KQQT and VTDI…RREF.

As to quaternary structure, binds DNA as a dimer.

Its subcellular location is the cytoplasm. In terms of biological role, activates expression of the rhaBAD and rhaT operons. This chain is HTH-type transcriptional activator RhaS, found in Escherichia coli O81 (strain ED1a).